Here is a 677-residue protein sequence, read N- to C-terminus: MHDARTFFMRGSCTYAHPVAIGRFFPLSSPTHTPQGTLMKSHGTMCSRNALLLPRRGAGLHVLTPRIREARPVNTGVKVILSLFATLVLMVGVFFCAPRASFAEFERHFYQPTVLSALSTNLREVSKASEAWHSRYRPLFSQFCALDAVRSSFDPAQKAEDITQRAREASALLSSVAGLKGVRIVEAQKPNIHFSTFESDVLLADSGSVTYRKYNAEEHDVPLQFLGEHSPEPKVIIDEYHDALLYSFPSLGNYGEYRGRILFYLSLRALGTHLIAENKLKITDSIVPLSADDYTFGGIVIGIPHEGVRSLKPSVLAEWKRKQFRVQTVRSEQHEDWALLSNASGAFVIAQAVPVLLFGFTPLTKGLVAMVAVVTTFLLVFQLLSLRQDPLTKLRDRLIHFHAQLLHSCLEQKESLEWEEVRTRLEHRRRETDAEMKKSLPRRLRIRRGRELDALLSKGWDDVFSTLEHGYGGARAMNRAQIEQLVREVLAQSLASGEAVLPVAMRADTADEELDEVLEELPDEAASLPSDSSPEEDLDPLEEVESIEGTAEESTREYAAAGDALLSKTPQLSTHSEYVPATLAELLGRNAEPGDVVRDSAVLEYIEGVFDYRPCCFYESHAVHDCLEVVTGEDGPSLSPMESIVSTEDGLFTIRVSKEEGNHLNRDFKALVDSVLY.

3 consecutive transmembrane segments (helical) span residues 80-102 (ILSL…RASF), 338-360 (ALLS…LFGF), and 367-386 (LVAM…LLSL). A disordered region spans residues 523-556 (DEAASLPSDSSPEEDLDPLEEVESIEGTAEESTR). Residues 533-546 (SPEEDLDPLEEVES) show a composition bias toward acidic residues.

It localises to the cell membrane. This is an uncharacterized protein from Treponema pallidum (strain Nichols).